Consider the following 292-residue polypeptide: G1/S-specific cyclin-D3 (292 aa).

Positions 27 to 152 (VLQSLLRLEE…LVLGKLKWDL (126 aa)) constitute a Cyclin N-terminal domain. The interval 256–292 (REAAQTAPSPVPKAPRGSSSQGPSQTSTPTDVTAIHL) is disordered. Residues serine 264 and serine 279 each carry the phosphoserine modification. Low complexity predominate over residues 272–285 (GSSSQGPSQTSTPT). Threonine 283 bears the Phosphothreonine mark.

The protein belongs to the cyclin family. Cyclin D subfamily. As to quaternary structure, interacts with the CDK4 and CDK6 protein kinases to form a serine/threonine kinase holoenzyme complex. The cyclin subunit imparts substrate specificity to the complex. Interacts with ATF5. Interacts with EIF3K. Component of the ternary complex cyclin D/CDK4/CDKN1B required for nuclear translocation and modulation of CDK4-mediated kinase activity. Can form similar complexes with either CDKN1A or CDKN2A. In terms of processing, phosphorylation at Thr-283 by MAP kinases is required for ubiquitination and degradation by the DCX(AMBRA1) complex. Ubiquitinated by the DCX(AMBRA1) complex during the transition from G1 to S cell phase, leading to its degradation: ubiquitination is dependent on Thr-283 phosphorylation. The DCX(AMBRA1) complex represents the major regulator of CCND3 stability during the G1/S transition. Polyubiquitinated by the SCF(FBXL2) complex, leading to proteasomal degradation.

The protein localises to the nucleus. The protein resides in the cytoplasm. Regulatory component of the cyclin D3-CDK4 (DC) complex that phosphorylates and inhibits members of the retinoblastoma (RB) protein family including RB1 and regulates the cell-cycle during G(1)/S transition. Phosphorylation of RB1 allows dissociation of the transcription factor E2F from the RB/E2F complex and the subsequent transcription of E2F target genes which are responsible for the progression through the G(1) phase. Hypophosphorylates RB1 in early G(1) phase. Cyclin D-CDK4 complexes are major integrators of various mitogenenic and antimitogenic signals. Component of the ternary complex, cyclin D3/CDK4/CDKN1B, required for nuclear translocation and activity of the cyclin D-CDK4 complex. Shows transcriptional coactivator activity with ATF5 independently of CDK4. This is G1/S-specific cyclin-D3 from Mus musculus (Mouse).